Consider the following 84-residue polypeptide: Mu-conotoxin-like Cal 12.2b (84 aa).

A signal peptide spans 1–19 (MKLTCVLVVLLLVLPFGDL). Positions 20–42 (ITTSNTEDNKRGATPWQNSLKAR) are excised as a propeptide. 4 cysteine pairs are disulfide-bonded: Cys45/Cys57, Cys52/Cys65, Cys59/Cys70, and Cys64/Cys76. Trp72 bears the 6'-bromotryptophan mark. Pro77 carries the 4-hydroxyproline modification. Trp81 is modified (6'-bromotryptophan).

This sequence belongs to the conotoxin O1 superfamily. As to expression, expressed by the venom duct.

Its subcellular location is the secreted. Its function is as follows. Mu-conotoxins block voltage-gated sodium channels. This toxin reversibly blocks voltage-gated sodium channel in cephalopods, with no alteration in the voltage dependence of sodium conductance or on the kinetics of inactivation. The protein is Mu-conotoxin-like Cal 12.2b of Californiconus californicus (California cone).